Here is a 183-residue protein sequence, read N- to C-terminus: NEDD8-conjugating enzyme Ubc12 (183 aa).

N-acetylmethionine is present on methionine 1. Residues 1–28 (MIKLFSLKQQKKEEESAGGTKGSSKKAS) form a disordered region. Residues 29–173 (AAQLRIQKDI…VQRSMRGGYI (145 aa)) enclose the UBC core domain. Catalysis depends on cysteine 111, which acts as the Glycyl thioester intermediate.

It belongs to the ubiquitin-conjugating enzyme family. UBC12 subfamily. Post-translationally, the acetylation of Met-1 increases affinity for DCUN1D1 by about 2 orders of magnitude and is crucial for NEDD8 transfer to cullins.

The enzyme catalyses [E1 NEDD8-activating enzyme]-S-[NEDD8 protein]-yl-L-cysteine + [E2 NEDD8-conjugating enzyme]-L-cysteine = [E1 NEDD8-activating enzyme]-L-cysteine + [E2 NEDD8-conjugating enzyme]-S-[NEDD8-protein]-yl-L-cysteine.. It functions in the pathway protein modification; protein neddylation. Its function is as follows. Accepts the ubiquitin-like protein NEDD8 from the UBA3-NAE1 E1 complex and catalyzes its covalent attachment to other proteins. The specific interaction with the E3 ubiquitin ligase rbx1, but not rbx2, suggests that the rbx1-ube2m complex neddylates specific target proteins, such as cul1, cul2, cul3 and cul4. Involved in cell proliferation. The chain is NEDD8-conjugating enzyme Ubc12 (ube2m) from Xenopus tropicalis (Western clawed frog).